Here is an 88-residue protein sequence, read N- to C-terminus: Phosphocarrier protein HPr (88 aa).

The HPr domain maps to 1–88 (MEKRDFHVVA…ETMKKEGLSE (88 aa)). Histidine 15 serves as the catalytic Pros-phosphohistidine intermediate. Serine 46 is modified (phosphoserine; by HPrK/P).

This sequence belongs to the HPr family.

The protein localises to the cytoplasm. Its activity is regulated as follows. Phosphorylation on Ser-46 inhibits the phosphoryl transfer from enzyme I to HPr. In terms of biological role, general (non sugar-specific) component of the phosphoenolpyruvate-dependent sugar phosphotransferase system (sugar PTS). This major carbohydrate active-transport system catalyzes the phosphorylation of incoming sugar substrates concomitantly with their translocation across the cell membrane. The phosphoryl group from phosphoenolpyruvate (PEP) is transferred to the phosphoryl carrier protein HPr by enzyme I. Phospho-HPr then transfers it to the PTS EIIA domain. Its function is as follows. P-Ser-HPr interacts with the catabolite control protein A (CcpA), forming a complex that binds to DNA at the catabolite response elements cre, operator sites preceding a large number of catabolite-regulated genes. Thus, P-Ser-HPr is a corepressor in carbon catabolite repression (CCR), a mechanism that allows bacteria to coordinate and optimize the utilization of available carbon sources. P-Ser-HPr also plays a role in inducer exclusion, in which it probably interacts with several non-PTS permeases and inhibits their transport activity. The chain is Phosphocarrier protein HPr (ptsH) from Latilactobacillus sakei (Lactobacillus sakei).